Here is an 89-residue protein sequence, read N- to C-terminus: Large ribosomal subunit protein bL28 (89 aa).

It belongs to the bacterial ribosomal protein bL28 family.

This is Large ribosomal subunit protein bL28 from Chlamydia trachomatis serovar A (strain ATCC VR-571B / DSM 19440 / HAR-13).